The primary structure comprises 291 residues: N-acetylmannosamine kinase (291 aa).

Residues 5–12 (AIDIGGTK) and 132–139 (GVGGGVVC) each bind ATP. The Zn(2+) site is built by His-156, Cys-166, Cys-168, and Cys-173.

It belongs to the ROK (NagC/XylR) family. NanK subfamily. As to quaternary structure, homodimer.

It catalyses the reaction an N-acyl-D-mannosamine + ATP = an N-acyl-D-mannosamine 6-phosphate + ADP + H(+). The protein operates within amino-sugar metabolism; N-acetylneuraminate degradation; D-fructose 6-phosphate from N-acetylneuraminate: step 2/5. Catalyzes the phosphorylation of N-acetylmannosamine (ManNAc) to ManNAc-6-P. The polypeptide is N-acetylmannosamine kinase (Salmonella gallinarum (strain 287/91 / NCTC 13346)).